Here is a 787-residue protein sequence, read N- to C-terminus: uncharacterized protein (787 aa).

Met-1 carries the N-acetylmethionine modification. Disordered regions lie at residues 1–115 (MFDG…NDHK), 130–200 (TNPF…QRSE), and 217–238 (VSSG…ASQD). Residues 36-54 (VPSTIKKSTNIARTSTAET) show a composition bias toward polar residues. The residue at position 63 (Ser-63) is a Phosphoserine. Polar residues predominate over residues 130-142 (TNPFTTSANSNAH). Residues 160-169 (SITTSISNNT) are compositionally biased toward low complexity. The segment covering 170–184 (TKEEIESNNDSERDS) has biased composition (basic and acidic residues). The segment covering 218–230 (SSGSSLSLDTSEN) has biased composition (low complexity). A phosphoserine mark is found at Ser-254, Ser-313, Ser-342, Ser-345, Ser-390, Ser-477, Ser-492, Ser-546, Ser-683, and Ser-699.

The protein localises to the cytoplasm. This is an uncharacterized protein from Saccharomyces cerevisiae (strain ATCC 204508 / S288c) (Baker's yeast).